A 343-amino-acid chain; its full sequence is Phospholipid phosphatase-related protein type 2 (343 aa).

3 consecutive transmembrane segments (helical) span residues phenylalanine 12–leucine 32, valine 69–glycine 89, and phenylalanine 129–valine 149. An N-linked (GlcNAc...) asparagine glycan is attached at asparagine 165. A run of 3 helical transmembrane segments spans residues alanine 210–valine 230, serine 239–tyrosine 259, and valine 266–histidine 286. Positions serine 290–threonine 343 are disordered. A phosphoserine mark is found at serine 299 and serine 312. Residues glycine 322–arginine 335 are compositionally biased toward basic residues.

The protein belongs to the PA-phosphatase related phosphoesterase family.

It is found in the membrane. The polypeptide is Phospholipid phosphatase-related protein type 2 (Homo sapiens (Human)).